The primary structure comprises 130 residues: Holo-[acyl-carrier-protein] synthase (130 aa).

2 residues coordinate Mg(2+): Asp-8 and Glu-62.

This sequence belongs to the P-Pant transferase superfamily. AcpS family. It depends on Mg(2+) as a cofactor.

The protein localises to the cytoplasm. The catalysed reaction is apo-[ACP] + CoA = holo-[ACP] + adenosine 3',5'-bisphosphate + H(+). Its function is as follows. Transfers the 4'-phosphopantetheine moiety from coenzyme A to a Ser of acyl-carrier-protein. This is Holo-[acyl-carrier-protein] synthase from Variovorax paradoxus (strain S110).